The sequence spans 67 residues: MPKLKTKSGVKKRFKFTASGKVKHGVAGKRHRLISHNSKYIRTNRGTSVLSEADAAHVRLWAPYGLK.

Belongs to the bacterial ribosomal protein bL35 family.

This is Large ribosomal subunit protein bL35 from Sphingopyxis alaskensis (strain DSM 13593 / LMG 18877 / RB2256) (Sphingomonas alaskensis).